The following is a 418-amino-acid chain: Deubiquitinase and deneddylase Dub1 (418 aa).

Residues 1 to 10 (MLSPTNSISK) show a composition bias toward polar residues. Residues 1–23 (MLSPTNSISKTAPVPPQDSSKPV) are disordered. A helical membrane pass occupies residues 40–60 (TALAVLLVVVTLGLILLFYSF). A disordered region spans residues 72–144 (TRPSTKEQPT…PLPPKAPKPV (73 aa)). A compositionally biased stretch (pro residues) spans 86-141 (VPLPSPPLAVPRPSTPPPPVISRPSTPPAPTPAISPPSTPSAPKPSTPPPLPPKAP). Catalysis depends on residues His288, Asp305, and Cys358.

This sequence belongs to the peptidase C48 family.

It localises to the secreted. The protein localises to the host cell. The protein resides in the membrane. Effector proteins function to alter host cell physiology and promote bacterial survival in host tissues. This protease possesses deubiquitinating and deneddylating activities. The sequence is that of Deubiquitinase and deneddylase Dub1 (cdu1) from Chlamydia trachomatis serovar B (strain TZ1A828/OT).